Here is a 441-residue protein sequence, read N- to C-terminus: Probable membrane metalloprotease ARASP2, chloroplastic (441 aa).

The transit peptide at 1-84 directs the protein to the chloroplast; the sequence is MLLNISSSPI…DFGSLESVLE (84 aa). Residue H96 participates in Zn(2+) binding. The active site involves E97. A Zn(2+)-binding site is contributed by H100. A helical membrane pass occupies residues 171–191; sequence VIVVSAGIVANVIFAYAIIFT. The region spanning 196-249 is the PDZ domain; sequence VGLPVQESFPGVLVPDVKSFSAASRDGLLPGDVILAVDGTELSNSGSDSVSKVV. 2 helical membrane passes run 373-393 and 407-427; these read LAVI…ALIL and VEQG…LFLI.

This sequence belongs to the peptidase M50A family. It depends on Zn(2+) as a cofactor.

Its subcellular location is the plastid. The protein localises to the chloroplast inner membrane. Metalloprotease essential for chloroplast and plant development. May be involved in regulated intramembrane proteolysis (RIP). The protein is Probable membrane metalloprotease ARASP2, chloroplastic of Arabidopsis thaliana (Mouse-ear cress).